A 205-amino-acid chain; its full sequence is Transcriptional regulator GfcR (205 aa).

Belongs to the purine/pyrimidine phosphoribosyltransferase family. GfcR subfamily.

The sequence is that of Transcriptional regulator GfcR from Methanococcus maripaludis (strain C7 / ATCC BAA-1331).